The sequence spans 227 residues: Cytochrome c oxidase subunit 2 (227 aa).

Residues 1-14 (MAHAAQVGLQDATS) are Mitochondrial intermembrane-facing. A helical membrane pass occupies residues 15 to 45 (PIMEELITFHDHALMIIFLICFLVLYALFLT). Residues 46 to 59 (LTTKLTSTNISDAQ) lie on the Mitochondrial matrix side of the membrane. Residues 60–87 (EMETIWTILPAIILVLIALPSLRILYMT) form a helical membrane-spanning segment. The Mitochondrial intermembrane segment spans residues 88–227 (DEINDPSFTI…IFEMGPVFAL (140 aa)). His161, Cys196, Glu198, Cys200, His204, and Met207 together coordinate Cu cation. Glu198 is a binding site for Mg(2+).

Belongs to the cytochrome c oxidase subunit 2 family. As to quaternary structure, component of the cytochrome c oxidase (complex IV, CIV), a multisubunit enzyme composed of 14 subunits. The complex is composed of a catalytic core of 3 subunits MT-CO1, MT-CO2 and MT-CO3, encoded in the mitochondrial DNA, and 11 supernumerary subunits COX4I, COX5A, COX5B, COX6A, COX6B, COX6C, COX7A, COX7B, COX7C, COX8 and NDUFA4, which are encoded in the nuclear genome. The complex exists as a monomer or a dimer and forms supercomplexes (SCs) in the inner mitochondrial membrane with NADH-ubiquinone oxidoreductase (complex I, CI) and ubiquinol-cytochrome c oxidoreductase (cytochrome b-c1 complex, complex III, CIII), resulting in different assemblies (supercomplex SCI(1)III(2)IV(1) and megacomplex MCI(2)III(2)IV(2)). Found in a complex with TMEM177, COA6, COX18, COX20, SCO1 and SCO2. Interacts with TMEM177 in a COX20-dependent manner. Interacts with COX20. Interacts with COX16. Cu cation serves as cofactor.

The protein localises to the mitochondrion inner membrane. The enzyme catalyses 4 Fe(II)-[cytochrome c] + O2 + 8 H(+)(in) = 4 Fe(III)-[cytochrome c] + 2 H2O + 4 H(+)(out). Its function is as follows. Component of the cytochrome c oxidase, the last enzyme in the mitochondrial electron transport chain which drives oxidative phosphorylation. The respiratory chain contains 3 multisubunit complexes succinate dehydrogenase (complex II, CII), ubiquinol-cytochrome c oxidoreductase (cytochrome b-c1 complex, complex III, CIII) and cytochrome c oxidase (complex IV, CIV), that cooperate to transfer electrons derived from NADH and succinate to molecular oxygen, creating an electrochemical gradient over the inner membrane that drives transmembrane transport and the ATP synthase. Cytochrome c oxidase is the component of the respiratory chain that catalyzes the reduction of oxygen to water. Electrons originating from reduced cytochrome c in the intermembrane space (IMS) are transferred via the dinuclear copper A center (CU(A)) of subunit 2 and heme A of subunit 1 to the active site in subunit 1, a binuclear center (BNC) formed by heme A3 and copper B (CU(B)). The BNC reduces molecular oxygen to 2 water molecules using 4 electrons from cytochrome c in the IMS and 4 protons from the mitochondrial matrix. In Gorilla gorilla gorilla (Western lowland gorilla), this protein is Cytochrome c oxidase subunit 2 (MT-CO2).